A 697-amino-acid polypeptide reads, in one-letter code: ATP-dependent zinc metalloprotease FtsH (697 aa).

The disordered stretch occupies residues 1–23; the sequence is MSQNERDSLELERKNTPPDGPRL. Topologically, residues 1–29 are cytoplasmic; sequence MSQNERDSLELERKNTPPDGPRLPERRPR. Residues 30–50 form a helical membrane-spanning segment; it reads FSVWIYLAIFLALLVHFFLFW. Residues 51–158 lie on the Periplasmic side of the membrane; the sequence is TGTDTSTIEY…QFTARIEENW (108 aa). Residues 159–179 form a helical membrane-spanning segment; that stretch reads FGGLLTWIFPLILIVALWVFL. The Cytoplasmic portion of the chain corresponds to 180 to 697; it reads LRRMSPSSQV…TERPESSSAP (518 aa). An ATP-binding site is contributed by 251–258; the sequence is GPPGTGKT. Zn(2+) is bound at residue His-474. Glu-475 is a catalytic residue. Residues His-478 and Asp-550 each coordinate Zn(2+). The interval 649–697 is disordered; sequence GPRPYGDYPSPNGKDVEELKDLQKGEPTSSSAVEAPAPQTERPESSSAP. The segment covering 662 to 672 has biased composition (basic and acidic residues); it reads KDVEELKDLQK.

It in the central section; belongs to the AAA ATPase family. In the C-terminal section; belongs to the peptidase M41 family. As to quaternary structure, homohexamer. It depends on Zn(2+) as a cofactor.

Its subcellular location is the cell inner membrane. In terms of biological role, acts as a processive, ATP-dependent zinc metallopeptidase for both cytoplasmic and membrane proteins. Plays a role in the quality control of integral membrane proteins. The chain is ATP-dependent zinc metalloprotease FtsH from Rhodothermus marinus (strain ATCC 43812 / DSM 4252 / R-10) (Rhodothermus obamensis).